A 365-amino-acid polypeptide reads, in one-letter code: MWLQHLSLKTFRNYKETKIDFNPKLNVFLGRNAQGKTNMLEAIYFLALTRSHRTRTDKNLIHFDEEQLHLSGLVQKKTGSIPLEIELTQKGRVTKVNHLKQARLSDYVGHMNVVLFAPEDLQLIKGAPSIRRKFIDMELGQIKPIYLSDLTNYNHILKQRNTYLKSDQKIDETFLSVLDDQLVDYGCRVMNHRLDFIKKLESFGRKKHFELSNQIEELSISYQSSVNITDKQNLSESFKIALEKSRSRDLFKKNTGVGPHRDDISFYINGMDASFGSQGQHRSLVLSIKLAEIELMESITTESPILLLDDVMSELDNTRQLKLLETISQSIQTFITTTSLDHLQNLPENLSIFTIQDGKASVNGN.

An ATP-binding site is contributed by 30–37; it reads GRNAQGKT.

This sequence belongs to the RecF family.

The protein resides in the cytoplasm. Functionally, the RecF protein is involved in DNA metabolism; it is required for DNA replication and normal SOS inducibility. RecF binds preferentially to single-stranded, linear DNA. It also seems to bind ATP. This chain is DNA replication and repair protein RecF, found in Streptococcus pneumoniae (strain 70585).